Reading from the N-terminus, the 386-residue chain is MKTAVLSLLLALQAYARVTGSPSGFAAGTTGGGSATPAAPSSLDELVQWITDDTPRVILIDRTWDFIGTEGTTTGKCCSMPSTTVCNGGTSKGQAWIQDHCDGGSWVSCKYDNAALTPMDVGSNKSIVGVGNKGVIKGKGLRVRNGNKNVIIQNIHITNLNPQYVWGGDAITLDNADQVWIDHNKISLIGRQFIVSGWGKAGHVTISNNEFDGRTSWSAGCNGKHYWTLLLLGEQDYYTFEGNWLHDVSGRAPHMGTDHTKSQIFFHGVNNYFQNLGGHAFDVDTNTWVLLEGNYFENVKTPLTDTSLKAGGKLYTTSTVNAAGACLDKLGYICEWNRLAGSGAWQDRTDADVKTKAATYKNSLVGHYPVADVPAKVVANAGVGKV.

An N-terminal signal peptide occupies residues 1 to 16 (MKTAVLSLLLALQAYA). An intrachain disulfide couples C77 to C101. An N-linked (GlcNAc...) asparagine glycan is attached at N124. Residue R251 is part of the active site. Cysteines 326 and 334 form a disulfide.

This sequence belongs to the polysaccharide lyase 1 family.

It localises to the secreted. It catalyses the reaction Eliminative cleavage of (1-&gt;4)-alpha-D-galacturonan methyl ester to give oligosaccharides with 4-deoxy-6-O-methyl-alpha-D-galact-4-enuronosyl groups at their non-reducing ends.. Pectinolytic enzymes consist of four classes of enzymes: pectin lyase, polygalacturonase, pectin methylesterase and rhamnogalacturonase. Among pectinolytic enzymes, pectin lyase is the most important in depolymerization of pectin, since it cleaves internal glycosidic bonds of highly methylated pectins. The polypeptide is Probable pectin lyase F (pelF) (Neosartorya fischeri (strain ATCC 1020 / DSM 3700 / CBS 544.65 / FGSC A1164 / JCM 1740 / NRRL 181 / WB 181) (Aspergillus fischerianus)).